The sequence spans 159 residues: Ribosomal RNA large subunit methyltransferase H (159 aa).

Residues Leu76, Gly108, and 127–132 (FSKMTF) contribute to the S-adenosyl-L-methionine site.

Belongs to the RNA methyltransferase RlmH family. In terms of assembly, homodimer.

The protein localises to the cytoplasm. It carries out the reaction pseudouridine(1915) in 23S rRNA + S-adenosyl-L-methionine = N(3)-methylpseudouridine(1915) in 23S rRNA + S-adenosyl-L-homocysteine + H(+). Functionally, specifically methylates the pseudouridine at position 1915 (m3Psi1915) in 23S rRNA. This is Ribosomal RNA large subunit methyltransferase H from Clostridium botulinum (strain 657 / Type Ba4).